The primary structure comprises 288 residues: Energy-coupling factor transporter ATP-binding protein EcfA2 (288 aa).

The region spanning 3 to 245 (IEFKNVDYIY…PDWLKKHFLD (243 aa)) is the ABC transporter domain. Position 40 to 47 (40 to 47 (GHTGSGKS)) interacts with ATP.

It belongs to the ABC transporter superfamily. Energy-coupling factor EcfA family. As to quaternary structure, forms a stable energy-coupling factor (ECF) transporter complex composed of 2 membrane-embedded substrate-binding proteins (S component), 2 ATP-binding proteins (A component) and 2 transmembrane proteins (T component).

It is found in the cell membrane. Functionally, ATP-binding (A) component of a common energy-coupling factor (ECF) ABC-transporter complex. Unlike classic ABC transporters this ECF transporter provides the energy necessary to transport a number of different substrates. In Lactobacillus gasseri (strain ATCC 33323 / DSM 20243 / BCRC 14619 / CIP 102991 / JCM 1131 / KCTC 3163 / NCIMB 11718 / NCTC 13722 / AM63), this protein is Energy-coupling factor transporter ATP-binding protein EcfA2.